A 759-amino-acid polypeptide reads, in one-letter code: Subtilisin-like protease SBT3.10 (759 aa).

The signal sequence occupies residues 1–25 (MSKTIILLAFFLSIVLNVQISFVVA). Positions 26 to 108 (ESKVYVVYLG…VIPNTLYEMT (83 aa)) are cleaved as a propeptide — activation peptide. Residues 29-106 (VYVVYLGEKE…VQVIPNTLYE (78 aa)) form the Inhibitor I9 domain. A Peptidase S8 domain is found at 112–606 (TWDYLGVSPG…GGLINPEKAV (495 aa)). Aspartate 142 acts as the Charge relay system in catalysis. N-linked (GlcNAc...) asparagine glycosylation is found at asparagine 175 and asparagine 202. The active-site Charge relay system is histidine 218. N-linked (GlcNAc...) asparagine glycans are attached at residues asparagine 233 and asparagine 361. A PA domain is found at 390–464 (DCEKLSANPK…ELGTDILFYI (75 aa)). Serine 537 acts as the Charge relay system in catalysis.

It belongs to the peptidase S8 family.

It localises to the secreted. This chain is Subtilisin-like protease SBT3.10, found in Arabidopsis thaliana (Mouse-ear cress).